The chain runs to 513 residues: ETS translocation variant 3 (513 aa).

Residues 35–116 (IQLWHFILEL…KGKRFTYKFN (82 aa)) constitute a DNA-binding region (ETS). Residues 138 to 202 (QSAPPVPTAS…DLEDGSASDW (65 aa)) are disordered. 3 positions are modified to phosphoserine: Ser-139, Ser-159, and Ser-315. Positions 333–513 (QMHPEEPSQF…ATTATAAADA (181 aa)) are disordered. Basic and acidic residues-rich tracts occupy residues 357–366 (ERVESREEAV), 380–392 (IKVE…DPDS), and 399–419 (GKEE…EEGK). A Glycyl lysine isopeptide (Lys-Gly) (interchain with G-Cter in SUMO2) cross-link involves residue Lys-381. N6-acetyllysine; alternate is present on Lys-388. Residue Lys-388 forms a Glycyl lysine isopeptide (Lys-Gly) (interchain with G-Cter in SUMO2); alternate linkage. A compositionally biased stretch (polar residues) spans 430–439 (WPSVSISTPS). The segment covering 441-450 (EPLEGTEDSE) has biased composition (acidic residues). Basic and acidic residues-rich tracts occupy residues 451-466 (DRSV…KEDA) and 477-489 (RWND…ELNK). Residues 504–513 (ATTATAAADA) are compositionally biased toward low complexity.

Belongs to the ETS family.

The protein resides in the nucleus. Transcriptional repressor that contribute to growth arrest during terminal macrophage differentiation by repressing target genes involved in Ras-dependent proliferation. Represses MMP1 promoter activity. This is ETS translocation variant 3 (Etv3) from Mus musculus (Mouse).